The following is a 119-amino-acid chain: Large ribosomal subunit protein uL18 (119 aa).

The interval 54–76 (LTSASTLADDVEGETPTEESRSV) is disordered.

The protein belongs to the universal ribosomal protein uL18 family. Part of the 50S ribosomal subunit; part of the 5S rRNA/L5/L18/L25 subcomplex. Contacts the 5S and 23S rRNAs.

In terms of biological role, this is one of the proteins that bind and probably mediate the attachment of the 5S RNA into the large ribosomal subunit, where it forms part of the central protuberance. The polypeptide is Large ribosomal subunit protein uL18 (Salinibacter ruber (strain DSM 13855 / M31)).